Reading from the N-terminus, the 148-residue chain is Leghemoglobin 29 (148 aa).

The Globin domain occupies 2–148 (EFTLRQEALV…LAVAIMKEMS (147 aa)). Residue tyrosine 30 is modified to Nitrated tyrosine. Serine 45 contacts heme b. Phosphoserine is present on serine 45. O2 is bound at residue histidine 63. Heme b is bound by residues histidine 95 and lysine 98. Nitrated tyrosine is present on tyrosine 136.

This sequence belongs to the plant globin family. Monomer. Nitrated in effective nodules and particularly in hypoxic conditions; this mechanism may play a protective role in the symbiosis by buffering toxic peroxynitrite NO(2)(-). Nitration level decrease during nodule senescence. Post-translationally, phosphorylation at Ser-45 disrupts the molecular environment of its porphyrin ring oxygen binding pocket, thus leading to a reduced oxygen consumption and to the delivery of oxygen O(2) to symbiosomes. Accumulates in root nodules after inoculation by bacteria of the genus Rhizobium. Expressed in mycorrhizal roots in the presence of the mycorrhizal fungus Glomus fasciculatum.

It is found in the cytoplasm. Its subcellular location is the cytosol. It localises to the nucleus. Its function is as follows. Leghemoglobin that reversibly binds oxygen O(2) through a pentacoordinated heme iron. In root nodules, facilitates the diffusion of oxygen to the bacteroids while preventing the bacterial nitrogenase from being inactivated by buffering dioxygen, nitric oxide and carbon monoxide, and promoting the formation of reactive oxygen species (ROS, e.g. H(2)O(2)). This role is essential for symbiotic nitrogen fixation (SNF). The sequence is that of Leghemoglobin 29 from Vicia faba (Broad bean).